The sequence spans 186 residues: Chromosome-anchoring protein RacA (186 aa).

The segment at residues 3–23 (TADAANELGVSTKTVQRWVKQ) is a DNA-binding region (H-T-H motif). The stretch at 90–170 (ERLEERLQRF…NRREKDTAVR (81 aa)) forms a coiled coil. The tract at residues 158-186 (ESMNRREKDTAVRREEKKPKSKLKSIFSF) is disordered. Residues 160-175 (MNRREKDTAVRREEKK) show a composition bias toward basic and acidic residues.

This sequence belongs to the RacA family.

It localises to the cytoplasm. Its function is as follows. Required for the formation of axial filaments and for anchoring the origin regions at the cell poles in sporulating cells, thus ensuring proper chromosome segregation in the prespore. Binds in a dispersed manner throughout the chromosome but preferentially to sites clustered in the origin portion of the chromosome, causing condensation of the chromosome and its remodeling into an elongated, anchored structure. This Bacillus licheniformis (strain ATCC 14580 / DSM 13 / JCM 2505 / CCUG 7422 / NBRC 12200 / NCIMB 9375 / NCTC 10341 / NRRL NRS-1264 / Gibson 46) protein is Chromosome-anchoring protein RacA.